A 189-amino-acid polypeptide reads, in one-letter code: Threonylcarbamoyl-AMP synthase (189 aa).

The region spanning 3 to 189 (TTSVTEAAEC…NALTGEVIRP (187 aa)) is the YrdC-like domain.

The protein belongs to the SUA5 family. TsaC subfamily.

The protein localises to the cytoplasm. The enzyme catalyses L-threonine + hydrogencarbonate + ATP = L-threonylcarbamoyladenylate + diphosphate + H2O. Required for the formation of a threonylcarbamoyl group on adenosine at position 37 (t(6)A37) in tRNAs that read codons beginning with adenine. Catalyzes the conversion of L-threonine, HCO(3)(-)/CO(2) and ATP to give threonylcarbamoyl-AMP (TC-AMP) as the acyladenylate intermediate, with the release of diphosphate. The chain is Threonylcarbamoyl-AMP synthase from Acinetobacter baumannii (strain ACICU).